The following is a 34-amino-acid chain: Conotoxin de13a (34 aa).

Proline 3 and proline 7 each carry 4-hydroxyproline. Tryptophan 14 carries the 6'-bromotryptophan modification. Lysine 18 is subject to 5-hydroxylysine. Proline 21 is modified (4-hydroxyproline). 5-hydroxylysine is present on lysine 25. Residue histidine 32 is modified to Histidine amide.

Contains 4 disulfide bonds. In terms of processing, the diastereomeric form of 5-hydroxylysine found was not conclusively established, but it is probably 5R. Expressed by the venom duct.

It localises to the secreted. The protein is Conotoxin de13a of Conasprella delessertii (Sozon's cone).